A 124-amino-acid chain; its full sequence is Small ribosomal subunit protein uS12 (124 aa).

The interval 1 to 25 (MATINQLVRKPRQASTYKSASPALD) is disordered.

Belongs to the universal ribosomal protein uS12 family. In terms of assembly, part of the 30S ribosomal subunit. Contacts proteins S8 and S17. May interact with IF1 in the 30S initiation complex.

In terms of biological role, with S4 and S5 plays an important role in translational accuracy. Its function is as follows. Interacts with and stabilizes bases of the 16S rRNA that are involved in tRNA selection in the A site and with the mRNA backbone. Located at the interface of the 30S and 50S subunits, it traverses the body of the 30S subunit contacting proteins on the other side and probably holding the rRNA structure together. The combined cluster of proteins S8, S12 and S17 appears to hold together the shoulder and platform of the 30S subunit. This is Small ribosomal subunit protein uS12 from Xylella fastidiosa (strain 9a5c).